We begin with the raw amino-acid sequence, 162 residues long: Troponin C, skeletal muscle (162 aa).

4 consecutive EF-hand domains span residues 17–52 (EMIA…LGQN), 53–88 (PTKE…QMKE), 93–128 (KSEE…TGEH), and 129–162 (VTEE…EGVQ). Ca(2+)-binding residues include D30, D32, D36, E41, D66, D68, S70, T72, E77, D106, N108, D110, E117, D142, N144, D146, R148, and E153.

This sequence belongs to the troponin C family.

In terms of biological role, troponin is the central regulatory protein of striated muscle contraction. Tn consists of three components: Tn-I which is the inhibitor of actomyosin ATPase, Tn-T which contains the binding site for tropomyosin and Tn-C. The binding of calcium to Tn-C abolishes the inhibitory action of Tn on actin filaments. This Meleagris gallopavo (Wild turkey) protein is Troponin C, skeletal muscle (TNNC2).